Consider the following 81-residue polypeptide: Cytotoxin 2 (81 aa).

Residues 1-21 form the signal peptide; that stretch reads MKTLLLTLVVVTIVCLDLGYT. Intrachain disulfides connect C24-C42, C35-C59, C63-C74, and C75-C80.

Belongs to the three-finger toxin family. Short-chain subfamily. Type IA cytotoxin sub-subfamily. Monomer in solution; Homodimer and oligomer in the presence of negatively charged lipids forming a pore with a size ranging between 20 and 30 Angstroms. Expressed by the venom gland.

The protein resides in the secreted. The protein localises to the target cell membrane. Its function is as follows. Basic protein that binds to cell membrane and depolarizes cardiomyocytes. It also shows lytic activities, but 2-fold less important than that of CTX-A4. It binds to the integrin alpha-V/beta-3 (ITGAV/ITGB3) with a moderate affinity. It may interact with sulfatides in the cell membrane which induces pore formation and cell internalization and is responsible for cytotoxicity in cardiomyocytes. It may also target the mitochondrial membrane and induce mitochondrial swelling and fragmentation. This is Cytotoxin 2 from Naja atra (Chinese cobra).